The chain runs to 878 residues: Splicing factor 3B subunit 2 (878 aa).

Basic and acidic residues predominate over residues 1-10; it reads MAAEHPEPPK. 2 disordered regions span residues 1 to 25 and 67 to 136; these read MAAEHPEPPKGELQLPPPPPPGHYG and RPVL…LRVG. K10 participates in a covalent cross-link: Glycyl lysine isopeptide (Lys-Gly) (interchain with G-Cter in SUMO2). The SAP domain occupies 24 to 58; sequence YGAWAAQELQARLAEIGAPIQGSREELVERLQTYT. Composition is skewed to pro residues over residues 91-114 and 122-133; these read PMPPPPMGLPPLQPPPPPPPPPPG and AHPPNLGPPPPL. A coiled-coil region spans residues 140–177; the sequence is ALSEEERLKLAQQQAALLMQQEERAKQAAVLMEQERQQ. Disordered regions lie at residues 183-356 and 383-436; these read GTAV…EYVT and KKEK…SKKK. A compositionally biased stretch (low complexity) spans 201–221; that stretch reads PLGPRVAAPVGPVVPTPTVLP. R205, R228, and R230 each carry omega-N-methylarginine. Residues 224-237 show a composition bias toward pro residues; it reads APVPRPRGPPPPPG. N6-acetyllysine is present on K258. Residues 260-269 are compositionally biased toward basic and acidic residues; it reads LQLKESRQEE. Residue K263 forms a Glycyl lysine isopeptide (Lys-Gly) (interchain with G-Cter in SUMO2) linkage. Position 272 is a phosphoserine (S272). T281 is modified (phosphothreonine). Residues S290 and S292 each carry the phosphoserine modification. T294 bears the Phosphothreonine mark. Phosphoserine is present on S300. Residues 305–321 are compositionally biased toward basic residues; that stretch reads EKNRKRRNRKKKKKPQR. Positions 330–342 are enriched in basic and acidic residues; that stretch reads SGDREKDSGRSRG. A Phosphoserine modification is found at S343. Glycyl lysine isopeptide (Lys-Gly) (interchain with G-Cter in SUMO2) cross-links involve residues K383 and K395. 2 stretches are compositionally biased toward basic and acidic residues: residues 383–397 and 405–414; these read KKEKEKEPEKLDKME and KGFEEEHKDS. Positions 384 to 533 are required for interaction with PRMT9; sequence KEKEKEPEKL…QEKEEQKTMK (150 aa). A phosphoserine mark is found at S414, S418, and S419. K475 participates in a covalent cross-link: Glycyl lysine isopeptide (Lys-Gly) (interchain with G-Cter in SUMO2). 2 positions are modified to omega-N-methylarginine: R491 and R498. R491 is subject to Symmetric dimethylarginine. A Glycyl lysine isopeptide (Lys-Gly) (interchain with G-Cter in SUMO2) cross-link involves residue K526. A disordered region spans residues 674 to 740; it reads AAEFQTKTEE…PGGFSSVPAG (67 aa). Positions 695–715 are enriched in acidic residues; it reads EPSDEESSEEEEEEESDEDKP. A Glycyl lysine isopeptide (Lys-Gly) (interchain with G-Cter in SUMO2) cross-link involves residue K753. Phosphothreonine is present on T763. Glycyl lysine isopeptide (Lys-Gly) (interchain with G-Cter in SUMO2) cross-links involve residues K773, K826, and K840. Over residues 827–852 the composition is skewed to basic and acidic residues; it reads YEEHVREQQAQVEKEDFSDMVAEHAA. Residues 827–878 form a disordered region; the sequence is YEEHVREQQAQVEKEDFSDMVAEHAAKQKQKKRKAQPQDSRGGSKKYKEFKF. S844 carries the post-translational modification Phosphoserine.

Component of the 17S U2 SnRNP complex, a ribonucleoprotein complex that contains small nuclear RNA (snRNA) U2 and a number of specific proteins. Part of the SF3B subcomplex of the 17S U2 SnRNP complex. SF3B associates with the splicing subcomplex SF3A and a 12S RNA unit to form the U2 small nuclear ribonucleoproteins complex (U2 snRNP). Within the SF3B complex, interacts directly with SF3B4. Found in a complex with PRMT9, SF3B2 and SF3B4. Interacts (Arg-491-methylated form) with SMN1 (via Tudor domain). Interacts with RBM7. Interacts with ERCC6. Component of the minor spliceosome. Within this complex, interacts with SCNM1 and CRIPT. Methylation at Arg-491 by PRMT9 is required for the interaction with SMN1.

It localises to the nucleus. Its subcellular location is the nucleus speckle. Its function is as follows. Component of the 17S U2 SnRNP complex of the spliceosome, a large ribonucleoprotein complex that removes introns from transcribed pre-mRNAs. The 17S U2 SnRNP complex (1) directly participates in early spliceosome assembly and (2) mediates recognition of the intron branch site during pre-mRNA splicing by promoting the selection of the pre-mRNA branch-site adenosine, the nucleophile for the first step of splicing. Within the 17S U2 SnRNP complex, SF3B2 is part of the SF3B subcomplex, which is required for 'A' complex assembly formed by the stable binding of U2 snRNP to the branchpoint sequence in pre-mRNA. Sequence independent binding of SF3A and SF3B subcomplexes upstream of the branch site is essential, it may anchor U2 snRNP to the pre-mRNA. May also be involved in the assembly of the 'E' complex. Also acts as a component of the minor spliceosome, which is involved in the splicing of U12-type introns in pre-mRNAs. The protein is Splicing factor 3B subunit 2 of Mus musculus (Mouse).